A 478-amino-acid polypeptide reads, in one-letter code: Dihydrolipoyl dehydrogenase (478 aa).

FAD-binding positions include 36-45 (ERYSTLGGVC), K54, and A117. The cysteines at positions 45 and 50 are disulfide-linked. NAD(+) is bound by residues 183-187 (GGGII), E206, V239, and 270-273 (AIGR). Positions 313 and 321 each coordinate FAD. H445 serves as the catalytic Proton acceptor.

It belongs to the class-I pyridine nucleotide-disulfide oxidoreductase family. Homodimer. FAD serves as cofactor.

The protein resides in the cytoplasm. It catalyses the reaction N(6)-[(R)-dihydrolipoyl]-L-lysyl-[protein] + NAD(+) = N(6)-[(R)-lipoyl]-L-lysyl-[protein] + NADH + H(+). Functionally, lipoamide dehydrogenase is a component of the alpha-ketoacid dehydrogenase complexes. This is Dihydrolipoyl dehydrogenase (lpdA) from Haemophilus influenzae (strain ATCC 51907 / DSM 11121 / KW20 / Rd).